A 328-amino-acid chain; its full sequence is Putative potassium channel protein YugO (328 aa).

The next 3 helical transmembrane spans lie at 19-39 (IGVI…ILEP), 42-62 (FTSV…VGYG), and 73-93 (AAGI…FATL). The RCK N-terminal domain maps to 114–238 (RDHIILIGWN…ERAGANQIIG (125 aa)).

Its subcellular location is the cell membrane. The chain is Putative potassium channel protein YugO (yugO) from Bacillus subtilis (strain 168).